The chain runs to 258 residues: Eukaryotic translation initiation factor 3 subunit J (258 aa).

The segment covering 1-11 has biased composition (low complexity); the sequence is MAAAAAAAGDS. Residues 1 to 108 form a disordered region; that stretch reads MAAAAAAAGD…LEEPEEPKVL (108 aa). At A2 the chain carries N-acetylalanine. The interval 2–69 is sufficient for interaction with EIF3B; that stretch reads AAAAAAAGDS…KEEAEVKPEV (68 aa). S11, S13, and S20 each carry phosphoserine. Positions 40 to 59 are enriched in acidic residues; it reads EGEDEDEDVKDNWDDDDDEK. The segment covering 60–106 has biased composition (basic and acidic residues); sequence KEEAEVKPEVKISEKKKIAEKIKEKERQQKKRQEEIKKRLEEPEEPK. A coiled-coil region spans residues 70 to 135; it reads KISEKKKIAE…ESDLELAKET (66 aa). K106 is covalently cross-linked (Glycyl lysine isopeptide (Lys-Gly) (interchain with G-Cter in SUMO2)). A Phosphothreonine modification is found at T109. S127 is modified (phosphoserine). A disordered region spans residues 217-238; sequence SKAKKKKKGVVPGGGLKATMKD. A promotes stable association with the 40S ribosome region spans residues 243–258; the sequence is YGGYDGGYVQDYEDFM. Residue Y254 is modified to Phosphotyrosine.

As to quaternary structure, component of the eukaryotic translation initiation factor 3 (eIF-3) complex, which is composed of 13 subunits: EIF3A, EIF3B, EIF3C, EIF3D, EIF3E, EIF3F, EIF3G, EIF3H, EIF3I, EIF3J, EIF3K, EIF3L and EIF3M. The eIF-3 complex appears to include 3 stable modules: module A is composed of EIF3A, EIF3B, EIF3G and EIF3I; module B is composed of EIF3F, EIF3H, and EIF3M; and module C is composed of EIF3C, EIF3D, EIF3E, EIF3K and EIF3L. EIF3C of module C binds EIF3B of module A and EIF3H of module B, thereby linking the three modules. EIF3J is a labile subunit that binds to the eIF-3 complex via EIF3B. The eIF-3 complex interacts with RPS6KB1 under conditions of nutrient depletion. Mitogenic stimulation leads to binding and activation of a complex composed of MTOR and RPTOR, leading to phosphorylation and release of RPS6KB1 and binding of EIF4B to eIF-3. Post-translationally, phosphorylated. Phosphorylation is enhanced upon serum stimulation.

It is found in the cytoplasm. Its function is as follows. Component of the eukaryotic translation initiation factor 3 (eIF-3) complex, which is required for several steps in the initiation of protein synthesis. The eIF-3 complex associates with the 40S ribosome and facilitates the recruitment of eIF-1, eIF-1A, eIF-2:GTP:methionyl-tRNAi and eIF-5 to form the 43S pre-initiation complex (43S PIC). The eIF-3 complex stimulates mRNA recruitment to the 43S PIC and scanning of the mRNA for AUG recognition. The eIF-3 complex is also required for disassembly and recycling of post-termination ribosomal complexes and subsequently prevents premature joining of the 40S and 60S ribosomal subunits prior to initiation. The eIF-3 complex specifically targets and initiates translation of a subset of mRNAs involved in cell proliferation, including cell cycling, differentiation and apoptosis, and uses different modes of RNA stem-loop binding to exert either translational activation or repression. The protein is Eukaryotic translation initiation factor 3 subunit J of Homo sapiens (Human).